The chain runs to 212 residues: Pyrrolidone-carboxylate peptidase (212 aa).

Active-site residues include Glu-80, Cys-143, and His-165.

This sequence belongs to the peptidase C15 family. Homotetramer.

It is found in the cytoplasm. It catalyses the reaction Release of an N-terminal pyroglutamyl group from a polypeptide, the second amino acid generally not being Pro.. Removes 5-oxoproline from various penultimate amino acid residues except L-proline. The chain is Pyrrolidone-carboxylate peptidase from Aliivibrio fischeri (strain MJ11) (Vibrio fischeri).